A 355-amino-acid chain; its full sequence is Protein RecA (355 aa).

Residue 67–74 (GPESSGKT) coordinates ATP.

This sequence belongs to the RecA family.

It localises to the cytoplasm. Its function is as follows. Can catalyze the hydrolysis of ATP in the presence of single-stranded DNA, the ATP-dependent uptake of single-stranded DNA by duplex DNA, and the ATP-dependent hybridization of homologous single-stranded DNAs. It interacts with LexA causing its activation and leading to its autocatalytic cleavage. In Histophilus somni (strain 129Pt) (Haemophilus somnus), this protein is Protein RecA.